The sequence spans 868 residues: mRNA-capping enzyme (868 aa).

The active-site N6-GMP-lysine intermediate is the Lys-282. In terms of domain architecture, mRNA cap 0 methyltransferase spans 594-868 (GIYRAQTALI…LFGFICLRKN (275 aa)). S-adenosyl-L-methionine contacts are provided by residues Lys-607, Gly-624, Asp-646, and 710 to 712 (LFI).

It in the N-terminal section; belongs to the dsDNA virus mRNA guanylyltransferase family. This sequence in the C-terminal section; belongs to the class I-like SAM-binding methyltransferase superfamily. mRNA cap 0 methyltransferase family. Part of the viral DNA-directed RNA polymerase that consists of 8 polII-like subunits (RPB1, RPB2, RPB3, RPB5, RPB6, RPB7, RPB9, RPB10), a capping enzyme and a termination factor.

It is found in the virion. It carries out the reaction a 5'-end triphospho-ribonucleoside in mRNA + H2O = a 5'-end diphospho-ribonucleoside in mRNA + phosphate + H(+). The enzyme catalyses a 5'-end diphospho-ribonucleoside in mRNA + GTP + H(+) = a 5'-end (5'-triphosphoguanosine)-ribonucleoside in mRNA + diphosphate. The catalysed reaction is a 5'-end (5'-triphosphoguanosine)-ribonucleoside in mRNA + S-adenosyl-L-methionine = a 5'-end (N(7)-methyl 5'-triphosphoguanosine)-ribonucleoside in mRNA + S-adenosyl-L-homocysteine. Its pathway is mRNA processing; mRNA capping. Its function is as follows. Probably catalyzes the second reaction in the mRNA cap formation pathway. Forms a covalent complex with GTP. This is mRNA-capping enzyme from African swine fever virus (isolate Tick/South Africa/Pretoriuskop Pr4/1996) (ASFV).